The chain runs to 445 residues: Maltoporin (445 aa).

Residues 1–25 (MKMKAKWLPIAAGVTAALASQAAFA) form the signal peptide.

It belongs to the porin LamB (TC 1.B.3) family. As to quaternary structure, homotrimer formed of three 18-stranded antiparallel beta-barrels, containing three independent channels.

It localises to the cell outer membrane. The enzyme catalyses beta-maltose(in) = beta-maltose(out). Involved in the transport of maltose and maltodextrins. This chain is Maltoporin, found in Aeromonas salmonicida.